An 88-amino-acid polypeptide reads, in one-letter code: Small ribosomal subunit protein uS15 (88 aa).

Belongs to the universal ribosomal protein uS15 family. As to quaternary structure, part of the 30S ribosomal subunit. Forms a bridge to the 50S subunit in the 70S ribosome, contacting the 23S rRNA.

In terms of biological role, one of the primary rRNA binding proteins, it binds directly to 16S rRNA where it helps nucleate assembly of the platform of the 30S subunit by binding and bridging several RNA helices of the 16S rRNA. Its function is as follows. Forms an intersubunit bridge (bridge B4) with the 23S rRNA of the 50S subunit in the ribosome. The chain is Small ribosomal subunit protein uS15 from Mycoplasmopsis pulmonis (strain UAB CTIP) (Mycoplasma pulmonis).